Consider the following 609-residue polypeptide: UvrABC system protein C (609 aa).

In terms of domain architecture, GIY-YIG spans 15–92 (TGSGVYQMQD…IKQFRPRYNV (78 aa)). Positions 202–237 (DQVIIKLTERMEVTSENLVFEEAAHYRDQIRQLRRL) constitute a UVR domain.

It belongs to the UvrC family. As to quaternary structure, interacts with UvrB in an incision complex.

The protein resides in the cytoplasm. Its function is as follows. The UvrABC repair system catalyzes the recognition and processing of DNA lesions. UvrC both incises the 5' and 3' sides of the lesion. The N-terminal half is responsible for the 3' incision and the C-terminal half is responsible for the 5' incision. This chain is UvrABC system protein C, found in Coxiella burnetii (strain RSA 493 / Nine Mile phase I).